A 50-amino-acid chain; its full sequence is Alpha-conotoxin CnIG (50 aa).

Positions 1–7 (LTTTVVS) are cleaved as a signal peptide. The span at 1 to 13 (LTTTVVSFPSDSA) shows a compositional bias: polar residues. The interval 1–26 (LTTTVVSFPSDSASDGRDNEAKDERS) is disordered. Positions 8-35 (FPSDSASDGRDNEAKDERSDMYELKRNG) are excised as a propeptide. Basic and acidic residues predominate over residues 14-26 (SDGRDNEAKDERS). Disulfide bonds link C37/C42 and C38/C48. C48 is modified (cysteine amide).

It belongs to the conotoxin A superfamily. In terms of tissue distribution, expressed by the venom duct.

Its subcellular location is the secreted. In Conus consors (Singed cone), this protein is Alpha-conotoxin CnIG.